The following is a 376-amino-acid chain: tRNA-specific 2-thiouridylase MnmA (376 aa).

ATP contacts are provided by residues 14–21 (GMSGGVDS) and M40. Residues 100–102 (NPD) form an interaction with target base in tRNA region. The active-site Nucleophile is the C105. C105 and C202 are joined by a disulfide. Residue G129 coordinates ATP. The tract at residues 152 to 154 (KDQ) is interaction with tRNA. C202 serves as the catalytic Cysteine persulfide intermediate. The tract at residues 315-316 (RY) is interaction with tRNA.

It belongs to the MnmA/TRMU family.

The protein resides in the cytoplasm. It carries out the reaction S-sulfanyl-L-cysteinyl-[protein] + uridine(34) in tRNA + AH2 + ATP = 2-thiouridine(34) in tRNA + L-cysteinyl-[protein] + A + AMP + diphosphate + H(+). Its function is as follows. Catalyzes the 2-thiolation of uridine at the wobble position (U34) of tRNA, leading to the formation of s(2)U34. This chain is tRNA-specific 2-thiouridylase MnmA, found in Lactococcus lactis subsp. cremoris (strain MG1363).